The primary structure comprises 391 residues: F-box protein At2g34280 (391 aa).

The region spanning Met-1 to Arg-43 is the F-box domain.

The polypeptide is F-box protein At2g34280 (Arabidopsis thaliana (Mouse-ear cress)).